The chain runs to 482 residues: Catalase (482 aa).

Catalysis depends on residues histidine 53 and asparagine 126. Tyrosine 336 is a binding site for heme.

Belongs to the catalase family. Requires heme as cofactor.

The protein resides in the periplasm. It carries out the reaction 2 H2O2 = O2 + 2 H2O. In terms of biological role, decomposes hydrogen peroxide into water and oxygen; serves to protect cells from the toxic effects of hydrogen peroxide. Could protect cells in nodules which have a high potential to produce hydrogen peroxide because of the strong reducing conditions required for nitrogen fixation and the action of several proteins. The polypeptide is Catalase (katA) (Aliivibrio fischeri (strain ATCC 700601 / ES114) (Vibrio fischeri)).